The following is a 269-amino-acid chain: 1,6-dihydroxycyclohexa-2,4-diene-1-carboxylate dehydrogenase (269 aa).

NAD(+) is bound at residue 11 to 35; the sequence is VITGAAQGIGRRVAERMAAEGGRLL. A substrate-binding site is contributed by serine 142. Tyrosine 153 acts as the Proton acceptor in catalysis.

Belongs to the short-chain dehydrogenases/reductases (SDR) family. In terms of assembly, homodimer.

It carries out the reaction (1R,6S)-1,6-dihydroxycyclohexa-2,4-diene-1-carboxylate + NAD(+) = catechol + CO2 + NADH. It participates in aromatic compound metabolism; benzoate degradation via hydroxylation; catechol from benzoate: step 2/2. Degradation of 2-hydro-1,2-dihydroxy benzoate (DHB) to catechol. This chain is 1,6-dihydroxycyclohexa-2,4-diene-1-carboxylate dehydrogenase (xylL), found in Pseudomonas putida (Arthrobacter siderocapsulatus).